A 262-amino-acid polypeptide reads, in one-letter code: DNA repair protein RecO (262 aa).

The protein belongs to the RecO family.

Its function is as follows. Involved in DNA repair and RecF pathway recombination. The protein is DNA repair protein RecO of Enterococcus faecalis (strain ATCC 700802 / V583).